The primary structure comprises 431 residues: Fumarylacetoacetase (431 aa).

Ca(2+) is bound at residue Asp133. A substrate-binding site is contributed by Tyr135. The Proton acceptor role is filled by His140. Arg149 is a binding site for substrate. Positions 209, 211, and 243 each coordinate Ca(2+). A Mg(2+)-binding site is contributed by Asp243. The substrate site is built by Gln250 and Tyr254. Mg(2+) contacts are provided by Lys263 and Thr267. Thr362 provides a ligand contact to substrate.

Belongs to the FAH family. The cofactor is Ca(2+). Mg(2+) is required as a cofactor.

It catalyses the reaction 4-fumarylacetoacetate + H2O = acetoacetate + fumarate + H(+). It participates in amino-acid degradation; L-phenylalanine degradation; acetoacetate and fumarate from L-phenylalanine: step 6/6. In terms of biological role, use of phenylalanine and phenylacetate as a carbon source. The sequence is that of Fumarylacetoacetase (fahA) from Emericella nidulans (strain FGSC A4 / ATCC 38163 / CBS 112.46 / NRRL 194 / M139) (Aspergillus nidulans).